A 431-amino-acid polypeptide reads, in one-letter code: NADH-quinone oxidoreductase chain 1 (431 aa).

54 to 63 (GRGGAGFPTG) is an NAD(+) binding site. Position 167 to 214 (167 to 214 (GAGAYICGEETALLESLEGKKGMPRMKPPFPAGAGLYGCPTTVNNVES)) interacts with FMN. Positions 346, 349, 352, and 392 each coordinate [4Fe-4S] cluster.

The protein belongs to the complex I 51 kDa subunit family. NDH-1 is composed of at least 14 different subunits, Nqo1 to Nqo14. The complex has a L-shaped structure, with the hydrophobic arm (subunits Nqo7, Nqo8, Nqo10 to Nqo14) embedded in the inner membrane and the hydrophilic peripheral arm (subunits Nqo1 to Nqo6, Nqo9) protruding into the bacterial cytoplasm. The hydrophilic domain contains all the redox centers. FMN is required as a cofactor. The cofactor is [4Fe-4S] cluster.

The protein resides in the cell inner membrane. The catalysed reaction is a quinone + NADH + 5 H(+)(in) = a quinol + NAD(+) + 4 H(+)(out). In terms of biological role, NDH-1 shuttles electrons from NADH, via FMN and iron-sulfur (Fe-S) centers, to quinones in the respiratory chain. The immediate electron acceptor for the enzyme in this species is believed to be ubiquinone. Couples the redox reaction to proton translocation (for every two electrons transferred, four hydrogen ions are translocated across the cytoplasmic membrane), and thus conserves the redox energy in a proton gradient. The chain is NADH-quinone oxidoreductase chain 1 (nqo1) from Paracoccus denitrificans.